The following is a 260-amino-acid chain: Adenosylcobinamide-GDP ribazoletransferase (260 aa).

8 helical membrane-spanning segments follow: residues Ala3–Trp23, Phe36–Ile56, Trp60–Leu80, Val108–Leu128, Leu133–Met153, Ala180–Val200, Met206–Leu226, and Gly239–Ala259.

The protein belongs to the CobS family. Mg(2+) serves as cofactor.

The protein resides in the cell inner membrane. The enzyme catalyses alpha-ribazole + adenosylcob(III)inamide-GDP = adenosylcob(III)alamin + GMP + H(+). The catalysed reaction is alpha-ribazole 5'-phosphate + adenosylcob(III)inamide-GDP = adenosylcob(III)alamin 5'-phosphate + GMP + H(+). It participates in cofactor biosynthesis; adenosylcobalamin biosynthesis; adenosylcobalamin from cob(II)yrinate a,c-diamide: step 7/7. Joins adenosylcobinamide-GDP and alpha-ribazole to generate adenosylcobalamin (Ado-cobalamin). Also synthesizes adenosylcobalamin 5'-phosphate from adenosylcobinamide-GDP and alpha-ribazole 5'-phosphate. This Prochlorococcus marinus (strain MIT 9303) protein is Adenosylcobinamide-GDP ribazoletransferase.